The primary structure comprises 95 residues: Small ribosomal subunit protein uS19 (95 aa).

This sequence belongs to the universal ribosomal protein uS19 family.

In terms of biological role, protein S19 forms a complex with S13 that binds strongly to the 16S ribosomal RNA. The protein is Small ribosomal subunit protein uS19 of Syntrophobacter fumaroxidans (strain DSM 10017 / MPOB).